Reading from the N-terminus, the 257-residue chain is MAKSWGETTGGSNDKIEFLKFNNGITRVRIVSGVLPRYVYWLTNKEGSVAPFECLRFNRDKESFVRGKADPVHELGFFEKELDKDGNRVPLKPKKNYIAFVIDRSDNKLKVMEVKATILKGIQSIMKQLNLATPFDIDISIEKKGKGFDTEYDVQQIAAMQFQIKLQDPNSAESKQYAADVDLIGEAMCDEDGDIIKFEKVPSLEQTYPVPTYEEQKEAIQAFMEGRENKDDDAKSGNSNAGSQKGIDQEAASDLDD.

Residues 222–257 (AFMEGRENKDDDAKSGNSNAGSQKGIDQEAASDLDD) are disordered. A compositionally biased stretch (basic and acidic residues) spans 225-235 (EGRENKDDDAK).

Its function is as follows. Required during DNA replication. Displaced viral DNA strands are transiently coated with the ssDNA-binding protein. It is then probably removed by the replisome that performs lagging strand synthesis or during the events that lead up to the recombination process. The polypeptide is Probable ssDNA-binding protein (D11) (Escherichia phage T5 (Enterobacteria phage T5)).